A 197-amino-acid polypeptide reads, in one-letter code: Adenylate kinase (197 aa).

An ATP-binding site is contributed by 12 to 17 (GSGKTT). The interval 34-63 (STGDMLREEVASGSELGKTIESYIAKGALV) is NMP. AMP contacts are provided by residues Thr35, Arg40, 61 to 63 (ALV), 88 to 91 (GYPR), and Gln95. The interval 130-144 (GRRAEAAPGEERSDD) is LID. ATP is bound at residue Arg131. Positions 141 and 152 each coordinate AMP. Residue Arg180 participates in ATP binding.

The protein belongs to the adenylate kinase family. As to quaternary structure, monomer.

The protein localises to the cytoplasm. It carries out the reaction AMP + ATP = 2 ADP. The protein operates within purine metabolism; AMP biosynthesis via salvage pathway; AMP from ADP: step 1/1. In terms of biological role, catalyzes the reversible transfer of the terminal phosphate group between ATP and AMP. Plays an important role in cellular energy homeostasis and in adenine nucleotide metabolism. This chain is Adenylate kinase, found in Sulfurovum sp. (strain NBC37-1).